An 802-amino-acid polypeptide reads, in one-letter code: Phenylalanine--tRNA ligase beta subunit (802 aa).

The 111-residue stretch at 38-148 (SKNFERVIVG…SEVPVGTDIS (111 aa)) folds into the tRNA-binding domain. The region spanning 403 to 478 (VIQKKIFVLK…RVFGYHNIPA (76 aa)) is the B5 domain. 3 residues coordinate Mg(2+): Asp456, Asp462, and Asp466. The FDX-ACB domain maps to 703 to 796 (SLYPRCSRDI…LQEKFNAILR (94 aa)).

The protein belongs to the phenylalanyl-tRNA synthetase beta subunit family. Type 1 subfamily. As to quaternary structure, tetramer of two alpha and two beta subunits. Mg(2+) is required as a cofactor.

It localises to the cytoplasm. It carries out the reaction tRNA(Phe) + L-phenylalanine + ATP = L-phenylalanyl-tRNA(Phe) + AMP + diphosphate + H(+). In Buchnera aphidicola subsp. Baizongia pistaciae (strain Bp), this protein is Phenylalanine--tRNA ligase beta subunit.